Here is a 595-residue protein sequence, read N- to C-terminus: Wee1-like protein kinase 1-B (595 aa).

Residues 1 to 17 are compositionally biased toward polar residues; that stretch reads MNVQPRNMNVQPRNMNV. The disordered stretch occupies residues 1–127; the sequence is MNVQPRNMNV…CPGTPPHKTF (127 aa). The segment covering 111-122 has biased composition (pro residues); that stretch reads PTSPIPECPGTP. Residue Thr186 is modified to Phosphothreonine; by cdk1. The Protein kinase domain occupies 248–518; it reads FHELEKIGSG…SVALVKHSVL (271 aa). ATP is bound by residues 254–262 and Lys277; that span reads IGSGEFGSV. The active-site Proton acceptor is the Asp375. Positions 380 and 412 each coordinate Mg(2+). A coiled-coil region spans residues 526–563; sequence AEQLRIELDAEKFKNALLQKELKKAQIAKAAAEERAHF.

This sequence belongs to the protein kinase superfamily. Ser/Thr protein kinase family. WEE1 subfamily. In terms of assembly, interacts (when phosphorylated at Thr-186) with pin1. Phosphorylation at Thr-186 during M-phase by cdk1 inhibits the kinase activity and leads to interaction with pin1. Zygotically expressed. Present in oocytes and postgastrula embryos (at least until the tailbud stage). Expression begins at the midblastula stage and increases after the early gastrula stage.

It is found in the nucleus. It carries out the reaction L-tyrosyl-[protein] + ATP = O-phospho-L-tyrosyl-[protein] + ADP + H(+). Functionally, acts as a zygotic negative regulator of entry into mitosis (G2 to M transition) by protecting the nucleus from cytoplasmically activated cyclin B1-complexed cdk1 before the onset of mitosis by mediating phosphorylation of cdk1 on 'Tyr-15'. Specifically phosphorylates and inactivates cyclin B1-complexed cdk1 reaching a maximum during G2 phase and a minimum as cells enter M phase. Phosphorylation of cyclin B1-cdk1 occurs exclusively on 'Tyr-15' and phosphorylation of monomeric cdk1 does not occur. The protein is Wee1-like protein kinase 1-B (wee1-b) of Xenopus laevis (African clawed frog).